We begin with the raw amino-acid sequence, 196 residues long: Early light-induced protein, chloroplastic (196 aa).

The N-terminal 48 residues, 1–48 (MAVSSCQSIMSNSMTNISSRSRVNQFTNIPSVYIPTLRRNVSLKVRSM), are a transit peptide targeting the chloroplast. Basic and acidic residues predominate over residues 47-57 (SMAEGEPKEQS). The disordered stretch occupies residues 47–81 (SMAEGEPKEQSKVAVDPTTPTASTPTPQPAYTRPP). Helical transmembrane passes span 105 to 125 (LAMI…QGLS), 132 to 152 (GVAW…IPFF), and 176 to 196 (IAML…TSLV).

It belongs to the ELIP/psbS family.

The protein resides in the plastid. It is found in the chloroplast membrane. Its function is as follows. Probably involved in the integration of pigments into the mature pigment-protein complexes. The chain is Early light-induced protein, chloroplastic from Pisum sativum (Garden pea).